Reading from the N-terminus, the 328-residue chain is Ornithine carbamoyltransferase, catabolic (328 aa).

Residues 56–59 (STRT), glutamine 83, arginine 107, and 134–137 (HPTQ) each bind carbamoyl phosphate. Residues asparagine 166, aspartate 230, and 234 to 235 (SM) each bind L-ornithine. Carbamoyl phosphate-binding positions include 270-271 (CL) and arginine 315.

It belongs to the aspartate/ornithine carbamoyltransferase superfamily. OTCase family.

It localises to the cytoplasm. The enzyme catalyses carbamoyl phosphate + L-ornithine = L-citrulline + phosphate + H(+). The protein operates within amino-acid degradation; L-arginine degradation via ADI pathway; carbamoyl phosphate from L-arginine: step 2/2. Reversibly catalyzes the transfer of the carbamoyl group from carbamoyl phosphate (CP) to the N(epsilon) atom of ornithine (ORN) to produce L-citrulline. The protein is Ornithine carbamoyltransferase, catabolic (arcB) of Borreliella afzelii (Borrelia afzelii).